The primary structure comprises 144 residues: Translation initiation factor 5A (144 aa).

Lysine 38 carries the post-translational modification Hypusine.

This sequence belongs to the eIF-5A family.

It localises to the cytoplasm. In terms of biological role, functions by promoting the formation of the first peptide bond. This Nanoarchaeum equitans (strain Kin4-M) protein is Translation initiation factor 5A.